Consider the following 607-residue polypeptide: Cyclic-di-GMP receptor FimW (607 aa).

Residues 323 to 492 are pilZ-like domain; sequence ERTFQRTQGQ…GGTQMGIEMI (170 aa). The RXXXR motif motif lies at 324–328; the sequence is RTFQR. Positions 435–440 match the D/NXSXXG motif motif; that stretch reads NHSPGG. Polar residues predominate over residues 568 to 582; that stretch reads SQFEYRSAEPVNTPS. A disordered region spans residues 568-607; it reads SQFEYRSAEPVNTPSDKPVTAPVARPPAGEEDFDSLWKSL.

In terms of assembly, monomer in the absence of c-di-GMP. Forms dimers in the presence of c-di-GMP.

It is found in the cytoplasm. Functionally, high-affinity cyclic-di-GMP binding protein that regulates type IV pili (T4P) elongation. Required for T4P-mediated surface attachment and walking motility during the early phases of surface colonization. Not required for twitching motility. Does not bind related nucleotides such as GMP, GDP, GTP or ATP. The polypeptide is Cyclic-di-GMP receptor FimW (Pseudomonas aeruginosa (strain ATCC 15692 / DSM 22644 / CIP 104116 / JCM 14847 / LMG 12228 / 1C / PRS 101 / PAO1)).